The sequence spans 539 residues: MADPDLSSPLIHHQSSDQPEVVISIADDDDDESGLNLLPAVVDPRVSRGFEFDHLNPYGFLSESEPPVLGPTTVDPFRNNTPGVSGLYEAIKLVICLPIALIRLVLFAASLAVGYLATKLALAGWKDKENPMPLWRCRIMWITRICTRCILFSFGYQWIRRKGKPARREIAPIVVSNHVSYIEPIFYFYELSPTIVASESHDSLPFVGTIIRAMQVIYVNRFSQTSRKNAVHEIKRKASCDRFPRLLLFPEGTTTNGKVLISFQLGAFIPGYPIQPVVVRYPHVHFDQSWGNISLLTLMFRMFTQFHNFMEVEYLPVIYPSEKQKQNAVRLSQKTSHAIATSLNVVQTSHSFADLMLLNKATELKLENPSNYMVEMARVESLFHVSSLEATRFLDTFVSMIPDSSGRVRLHDFLRGLKLKPCPLSKRIFEFIDVEKVGSITFKQFLFASGHVLTQPLFKQTCELAFSHCDADGDGYITIQELGEALKNTIPNLNKDEIRGMYHLLDDDQDQRISQNDLLSCLRRNPLLIAIFAPDLAPT.

A helical transmembrane segment spans residues 93-113 (LVICLPIALIRLVLFAASLAV). Positions 178–183 (HVSYIE) match the HXXXXD motif motif. EF-hand domains follow at residues 426–455 (KRIF…VLTQ), 457–492 (LFKQ…TIPN), and 493–528 (LNKD…NPLL). Residues D470, D472, D474, Y476, E481, D506, D508, D510, R512, and D517 each contribute to the Ca(2+) site.

Belongs to the 1-acyl-sn-glycerol-3-phosphate acyltransferase family.

The protein localises to the golgi apparatus membrane. Its subcellular location is the late endosome membrane. The enzyme catalyses a 1-acyl-sn-glycero-3-phosphoethanolamine + an acyl-CoA = a 1,2-diacyl-sn-glycero-3-phosphoethanolamine + CoA. The catalysed reaction is a 1-acyl-sn-glycero-3-phosphocholine + an acyl-CoA = a 1,2-diacyl-sn-glycero-3-phosphocholine + CoA. It catalyses the reaction a 1-acyl-sn-glycero-3-phospho-L-serine + an acyl-CoA = a 1,2-diacyl-sn-glycero-3-phospho-L-serine + CoA. The protein operates within lipid metabolism; phospholipid metabolism. Possesses acyl-CoA-dependent lysophospholipid acyltransferase activity with a subset of lysophospholipids as substrates. Exhibits strong acylation activity on lysophosphatidylethanolamine (LPE), and lower activity on lysophosphatidylcholine (LPC) and lysophosphatidylserine (LPS). Exhibits acylation activity on both LPE and LPC. Has a preference for 18:1-LPE over 16:0-LPE as acceptor. Palmitoyl-CoA (16:0-CoA) is a better acyl donor than oleoyl-CoA (18:1-CoA). Among several different acyl-CoA species the best acyl donor is eicosanoyl-CoA (20:0-CoA). Activity is calcium-independent. Its activity is essential for maintaining adequate levels of phosphatidylethanolamine (PE), LPE and LPC in the cells, which is crucial for plant growth regulation. The sequence is that of Lysophospholipid acyltransferase LPEAT2 from Arabidopsis thaliana (Mouse-ear cress).